A 163-amino-acid polypeptide reads, in one-letter code: ATP synthase subunit b 1 (163 aa).

Residues 5–25 (FDATFFAFVGLILFLALVVYL) traverse the membrane as a helical segment.

The protein belongs to the ATPase B chain family. In terms of assembly, F-type ATPases have 2 components, F(1) - the catalytic core - and F(0) - the membrane proton channel. F(1) has five subunits: alpha(3), beta(3), gamma(1), delta(1), epsilon(1). F(0) has three main subunits: a(1), b(2) and c(10-14). The alpha and beta chains form an alternating ring which encloses part of the gamma chain. F(1) is attached to F(0) by a central stalk formed by the gamma and epsilon chains, while a peripheral stalk is formed by the delta and b chains.

The protein localises to the cell inner membrane. In terms of biological role, f(1)F(0) ATP synthase produces ATP from ADP in the presence of a proton or sodium gradient. F-type ATPases consist of two structural domains, F(1) containing the extramembraneous catalytic core and F(0) containing the membrane proton channel, linked together by a central stalk and a peripheral stalk. During catalysis, ATP synthesis in the catalytic domain of F(1) is coupled via a rotary mechanism of the central stalk subunits to proton translocation. Functionally, component of the F(0) channel, it forms part of the peripheral stalk, linking F(1) to F(0). In Rhizobium etli (strain ATCC 51251 / DSM 11541 / JCM 21823 / NBRC 15573 / CFN 42), this protein is ATP synthase subunit b 1.